A 189-amino-acid polypeptide reads, in one-letter code: Large ribosomal subunit protein bL9 (189 aa).

Belongs to the bacterial ribosomal protein bL9 family.

In terms of biological role, binds to the 23S rRNA. In Methylocella silvestris (strain DSM 15510 / CIP 108128 / LMG 27833 / NCIMB 13906 / BL2), this protein is Large ribosomal subunit protein bL9.